The primary structure comprises 349 residues: D-alanine--D-alanine ligase (349 aa).

The 204-residue stretch at 132 to 335 folds into the ATP-grasp domain; the sequence is KHVFEAVGVP…YSDLIEKLVD (204 aa). 162–217 is an ATP binding site; it reads VEKLDFPVFVKPANMGSSVGISKVDDLADLQPALSEAYKYDNRVVIEQGVDAREIE. Mg(2+) contacts are provided by Asp-289, Glu-302, and Asn-304.

The protein belongs to the D-alanine--D-alanine ligase family. It depends on Mg(2+) as a cofactor. Requires Mn(2+) as cofactor.

The protein resides in the cytoplasm. The catalysed reaction is 2 D-alanine + ATP = D-alanyl-D-alanine + ADP + phosphate + H(+). The protein operates within cell wall biogenesis; peptidoglycan biosynthesis. Its function is as follows. Cell wall formation. This chain is D-alanine--D-alanine ligase, found in Lactococcus lactis subsp. cremoris (strain MG1363).